We begin with the raw amino-acid sequence, 570 residues long: Periplasmic trehalase (570 aa).

The N-terminal stretch at 1–34 is a signal peptide; sequence MIPPEIRRSVLLQKAIKLALAGTLLTFASFSATA. Substrate contacts are provided by residues Arg-159, 166–167, Asn-203, 212–214, 284–286, and Gly-317; these read WD, RSQ, and RPE. Catalysis depends on proton donor/acceptor residues Asp-319 and Glu-503. Position 518 (Glu-518) interacts with substrate. The disordered stretch occupies residues 545–570; it reads PCDSVPSTRPASLSATPTKTPSAATQ. The segment covering 554–570 has biased composition (low complexity); sequence PASLSATPTKTPSAATQ.

It belongs to the glycosyl hydrolase 37 family. Monomer.

It is found in the periplasm. It catalyses the reaction alpha,alpha-trehalose + H2O = alpha-D-glucose + beta-D-glucose. Provides the cells with the ability to utilize trehalose at high osmolarity by splitting it into glucose molecules that can subsequently be taken up by the phosphotransferase-mediated uptake system. This is Periplasmic trehalase from Salmonella agona (strain SL483).